Consider the following 447-residue polypeptide: UDP-N-acetylmuramoylalanine--D-glutamate ligase (447 aa).

An ATP-binding site is contributed by 112–118 (GTNGKST).

This sequence belongs to the MurCDEF family.

It is found in the cytoplasm. It catalyses the reaction UDP-N-acetyl-alpha-D-muramoyl-L-alanine + D-glutamate + ATP = UDP-N-acetyl-alpha-D-muramoyl-L-alanyl-D-glutamate + ADP + phosphate + H(+). The protein operates within cell wall biogenesis; peptidoglycan biosynthesis. In terms of biological role, cell wall formation. Catalyzes the addition of glutamate to the nucleotide precursor UDP-N-acetylmuramoyl-L-alanine (UMA). This Legionella pneumophila subsp. pneumophila (strain Philadelphia 1 / ATCC 33152 / DSM 7513) protein is UDP-N-acetylmuramoylalanine--D-glutamate ligase.